Consider the following 317-residue polypeptide: Ferrochelatase (317 aa).

Fe cation-binding residues include histidine 192 and glutamate 271.

Belongs to the ferrochelatase family.

It localises to the cytoplasm. The catalysed reaction is heme b + 2 H(+) = protoporphyrin IX + Fe(2+). The protein operates within porphyrin-containing compound metabolism; protoheme biosynthesis; protoheme from protoporphyrin-IX: step 1/1. Functionally, catalyzes the ferrous insertion into protoporphyrin IX. This Citrifermentans bemidjiense (strain ATCC BAA-1014 / DSM 16622 / JCM 12645 / Bem) (Geobacter bemidjiensis) protein is Ferrochelatase.